A 380-amino-acid polypeptide reads, in one-letter code: Cytochrome b (380 aa).

4 consecutive transmembrane segments (helical) span residues 34-54 (FGSL…LLAM), 78-99 (WLIR…YLHI), 114-134 (WNTG…GYVL), and 179-199 (FFAL…VHLT). Heme b contacts are provided by H84 and H98. Heme b contacts are provided by H183 and H197. H202 is a binding site for a ubiquinone. The next 4 membrane-spanning stretches (helical) occupy residues 227 to 247 (LKDI…ALFS), 289 to 309 (LGGV…PFLH), 321 to 341 (LSQL…WVGS), and 348 to 368 (FIII…ILFP).

This sequence belongs to the cytochrome b family. In terms of assembly, the cytochrome bc1 complex contains 11 subunits: 3 respiratory subunits (MT-CYB, CYC1 and UQCRFS1), 2 core proteins (UQCRC1 and UQCRC2) and 6 low-molecular weight proteins (UQCRH/QCR6, UQCRB/QCR7, UQCRQ/QCR8, UQCR10/QCR9, UQCR11/QCR10 and a cleavage product of UQCRFS1). This cytochrome bc1 complex then forms a dimer. The cofactor is heme b.

It is found in the mitochondrion inner membrane. Component of the ubiquinol-cytochrome c reductase complex (complex III or cytochrome b-c1 complex) that is part of the mitochondrial respiratory chain. The b-c1 complex mediates electron transfer from ubiquinol to cytochrome c. Contributes to the generation of a proton gradient across the mitochondrial membrane that is then used for ATP synthesis. The chain is Cytochrome b (MT-CYB) from Procellaria westlandica (Westland petrel).